Consider the following 537-residue polypeptide: MMVDFSPSRRRMGTQELSLKPQVETPGIKLLAVMFCRYHLIRQLKQVQAASRTRYAHSVPQSRPTLKERLAALHEKQQLSLLPPDAVKRVSENNPAVLIDCDARTLLQLFLAALQTDPQKTTLSELLSQEEGFSVFIHRLLPTYTPSSDLKHLVSKDGTTALLQKLYGFYREQFADAPIGRPSPGRLHDANSFARWFMAESKLRLARTVFAELVGNPTELAKLPRDTETIITLLQLHLGAKHIFWRDPGNSVGRGGQLFTPAHMAVVTAYNSLGEETLLRLLRLLQSDPQWKSVCSPDLDRNIILALAFHNRLDLVHAQAARYYAPAAPGHGLPSTPLLPDGALVGAVVTAFAFKHQLAQGLAIAYQFLDRFTHLPNEHELWKIIFTWLARRHPTGSQGAALYDEAWSKMRTRYAEHGQPTPYDYSIARASYRIVRRDSSLRRVRALLNDYMSPLYQQPAVAPRDRLLLLKCQAHIVGRLVRARRNSAAADFVDQWALDSEARSHLLEHIAARASSRTDADDDDAGDGLYLTGAPLW.

This sequence belongs to the AEP2 family. In terms of assembly, binds to the 5'UTR of the OLI1 mRNA.

It is found in the mitochondrion. Required for translation of the mitochondrial OLI1 transcript coding for the mitochondrial ATP synthase subunit 9. The polypeptide is ATPase expression protein 2, mitochondrial (AEP2) (Eremothecium gossypii (strain ATCC 10895 / CBS 109.51 / FGSC 9923 / NRRL Y-1056) (Yeast)).